A 692-amino-acid chain; its full sequence is Junctophilin-2 (692 aa).

Over 1 to 670 (MSGGRFDFDD…EVEVEEVPNT (670 aa)) the chain is Cytoplasmic. MORN repeat units follow at residues 14-36 (YCGG…KGQG), 38-59 (YSGS…SGNT), 60-79 (FEGY…TKGR), 82-104 (YKGE…NSGA), 106-128 (YEGT…DGGT), and 129-151 (YQGQ…PYGM). Phosphoserine occurs at positions 162 and 165. 2 disordered regions span residues 164 to 190 (SSLR…LPLP) and 246 to 273 (LSSG…AAPF). MORN repeat units lie at residues 285–307 (YMGE…SGLR) and 308–330 (YEGE…DGHR). The Bipartite nuclear localization signal signature appears at 345-359 (KRRVLPLKSNKVRQK). The segment at 439 to 661 (NSESLLEPRE…KEVAQEAEAE (223 aa)) is disordered. Phosphoserine is present on residues Ser-440, Ser-442, and Ser-462. Over residues 457–471 (ERPRESPQLHERETP) the composition is skewed to basic and acidic residues. Thr-470 carries the post-translational modification Phosphothreonine. Residues 474–487 (EGGPPSPAGTPPQP) are compositionally biased toward pro residues. The residue at position 479 (Ser-479) is a Phosphoserine. Position 483 is a phosphothreonine (Thr-483). The Nuclear localization signal motif lies at 488-492 (KRPRP). A phosphoserine mark is found at Ser-527 and Ser-533. Residues 573 to 582 (PLEDEPEPEP) are compositionally biased toward acidic residues. 4 positions are modified to phosphoserine: Ser-589, Ser-593, Ser-604, and Ser-609. The segment covering 627-640 (AEPKAKARKTEARG) has biased composition (basic and acidic residues). A helical; Anchor for type IV membrane protein transmembrane segment spans residues 671-691 (VLICMVILLNIGLAILFVHLL).

This sequence belongs to the junctophilin family. As to quaternary structure, interacts with TRPC3. Interacts with BAG5 and HSPA8; the interaction with HSPA8 is increased in the presence of BAG5. Junctophilin-2 N-terminal fragment: Interacts with MEF2C. Post-translationally, proteolytically cleaved by calpain in response to cardiac stress. The major cleavage site takes place at the C-terminus and leads to the release of the Junctophilin-2 N-terminal fragment chain (JP2NT). Phosphorylation on Ser-165, probably by PKC, affects RYR1-mediated calcium ion release, interaction with TRPC3, and skeletal muscle myotubule development.

It is found in the cell membrane. The protein localises to the sarcoplasmic reticulum membrane. It localises to the endoplasmic reticulum membrane. The protein resides in the nucleus. Membrane-binding protein that provides a structural bridge between the plasma membrane and the sarcoplasmic reticulum and is required for normal excitation-contraction coupling in cardiomyocytes. Provides a structural foundation for functional cross-talk between the cell surface and intracellular Ca(2+) release channels by maintaining the 12-15 nm gap between the sarcolemma and the sarcoplasmic reticulum membranes in the cardiac dyads. Necessary for proper intracellular Ca(2+) signaling in cardiac myocytes via its involvement in ryanodine receptor-mediated calcium ion release. Contributes to the construction of skeletal muscle triad junctions. In terms of biological role, transcription repressor required to safeguard against the deleterious effects of cardiac stress. Generated following cleavage of the Junctophilin-2 chain by calpain in response to cardiac stress in cardiomyocytes. Following cleavage and release from the membrane, translocates to the nucleus, binds DNA and represses expression of genes implicated in cell growth and differentiation, hypertrophy, inflammation and fibrosis. Modifies the transcription profile and thereby attenuates pathological remodeling in response to cardiac stress. Probably acts by competing with MEF2 transcription factors and TATA-binding proteins. The sequence is that of Junctophilin-2 from Rattus norvegicus (Rat).